The primary structure comprises 440 residues: MPKPVVAIVGRPNVGKSTLFNRIVGNRVAIVEGEPGVTRDRLYQDAEWSGRSFTLVDTGGLDFKESDEIIQGVRRQAEIAIREADAVLLVVDAKAGLNPGDEEVASIIRRAEKPALLVANKVEKFDSLEQIYDFYRLGLGDPLPVSAAEGLNTGDLLDRLVEMLPPEKEDEYPPEAIKIAVIGRPNVGKSSLVNLILGEERVIVSNVPGTTRDAIDTPFEANGRHYVIIDTAGMRRKSRIDRPTEKYGVIRALRAIDRSDVVLVVLDAVEGVTDQDKRIAGYAHEAGKASVIVVNKWDLVEKDGHTMNRYTEKIREELAFMHYSPLLFTSAATGKRVGKIMELVDMVAGRHSMRISTPGLNALIREAVLRTPPPSDKGRRLKITYAVQGGIKPPKFVLFVNAPDLMHFSYLRYLENQIRAAFGFEGTPIRFVLRKKTKEA.

2 EngA-type G domains span residues 4 to 168 (PVVA…PPEK) and 177 to 352 (IKIA…GRHS). Residues 10 to 17 (GRPNVGKS), 57 to 61 (DTGGL), 120 to 123 (NKVE), 183 to 190 (GRPNVGKS), 230 to 234 (DTAGM), and 295 to 298 (NKWD) each bind GTP. In terms of domain architecture, KH-like spans 353 to 437 (MRISTPGLNA…PIRFVLRKKT (85 aa)).

This sequence belongs to the TRAFAC class TrmE-Era-EngA-EngB-Septin-like GTPase superfamily. EngA (Der) GTPase family. In terms of assembly, associates with the 50S ribosomal subunit.

GTPase that plays an essential role in the late steps of ribosome biogenesis. In Pelotomaculum thermopropionicum (strain DSM 13744 / JCM 10971 / SI), this protein is GTPase Der.